A 510-amino-acid chain; its full sequence is MDEFQRXSNKHXXWQQLFLXPLFFREDLXAIGHDHHLDRSGSSEPTEIFFSHFFSFLTVKRSIRRIRKQNKSISLFGNSDSNKLIEYNKNFSFKSMLEGFTIVLEVSIAMRSKHFIKGMDGWNXLRSIHCIFPFMEDKLPHSNYISDIRVPYSIHPEILVRIFRRWIRDVPSLHLLRLILHEWKNSFSQENLEKXXLITQRGNTRFSLFLWNSYVYECESFLIPLIKRFFNPXSLLYGSFPDGIHXEKKIKDIVIFLLQKISTKKIWLLKDSFIHYVRYGERSLIALKGTHLQVKKCRYHLFHFWQYYFHLWFQPYRICSLELSKTSFSFLGFFLNVKMRPLVVRAKMLDDLFITDLITNELNPIAPIRSILFSLAKEKFCDISGWPISKLSWTSLSDDDILDRFDRIWINLFHYYSGSINQDGLYHIKYILLLSCAKTLACKHKSTIRVVREQLGSELFTNSFSKEREFISSSFSKTRSQRERIWNSEISQRNPLXXFWQKMENKQIEN.

Belongs to the intron maturase 2 family. MatK subfamily.

Its subcellular location is the plastid. It localises to the chloroplast. Its function is as follows. Usually encoded in the trnK tRNA gene intron. Probably assists in splicing its own and other chloroplast group II introns. The polypeptide is Maturase K (Thuja plicata (Western red-cedar)).